A 172-amino-acid polypeptide reads, in one-letter code: Ribosome maturation factor RimM (172 aa).

The PRC barrel domain maps to 97-170 (ENEFYFHEII…KITIEVMEGL (74 aa)).

This sequence belongs to the RimM family. Binds ribosomal protein uS19.

Its subcellular location is the cytoplasm. Its function is as follows. An accessory protein needed during the final step in the assembly of 30S ribosomal subunit, possibly for assembly of the head region. Essential for efficient processing of 16S rRNA. May be needed both before and after RbfA during the maturation of 16S rRNA. It has affinity for free ribosomal 30S subunits but not for 70S ribosomes. The protein is Ribosome maturation factor RimM of Listeria innocua serovar 6a (strain ATCC BAA-680 / CLIP 11262).